The primary structure comprises 292 residues: Protein/nucleic acid deglycase HchA (292 aa).

Residues 1-12 (MSQDVNELSKQP) show a composition bias toward polar residues. The interval 1 to 23 (MSQDVNELSKQPTPDKAEDNAFF) is disordered. Cys190 functions as the Nucleophile in the catalytic mechanism.

The protein belongs to the peptidase C56 family. HchA subfamily.

The protein localises to the cytoplasm. The catalysed reaction is N(omega)-(1-hydroxy-2-oxopropyl)-L-arginyl-[protein] + H2O = lactate + L-arginyl-[protein] + H(+). It carries out the reaction N(6)-(1-hydroxy-2-oxopropyl)-L-lysyl-[protein] + H2O = lactate + L-lysyl-[protein] + H(+). The enzyme catalyses S-(1-hydroxy-2-oxopropyl)-L-cysteinyl-[protein] + H2O = lactate + L-cysteinyl-[protein] + H(+). It catalyses the reaction N(omega)-(1-hydroxy-2-oxoethyl)-L-arginyl-[protein] + H2O = L-arginyl-[protein] + glycolate + H(+). The catalysed reaction is N(6)-(1-hydroxy-2-oxoethyl)-L-lysyl-[protein] + H2O = glycolate + L-lysyl-[protein] + H(+). It carries out the reaction S-(1-hydroxy-2-oxoethyl)-L-cysteinyl-[protein] + H2O = glycolate + L-cysteinyl-[protein] + H(+). The enzyme catalyses N(2)-(1-hydroxy-2-oxopropyl)-dGTP + H2O = lactate + dGTP + H(+). It catalyses the reaction N(2)-(1-hydroxy-2-oxopropyl)-GTP + H2O = lactate + GTP + H(+). The catalysed reaction is N(2)-(1-hydroxy-2-oxopropyl)-GDP + H2O = lactate + GDP + H(+). It carries out the reaction N(2)-(1-hydroxy-2-oxopropyl)-GMP + H2O = lactate + GMP + H(+). The enzyme catalyses N(2)-(1-hydroxy-2-oxoethyl)-dGTP + H2O = dGTP + glycolate + H(+). It catalyses the reaction N(2)-(1-hydroxy-2-oxoethyl)-GTP + H2O = glycolate + GTP + H(+). The catalysed reaction is N(2)-(1-hydroxy-2-oxoethyl)-GDP + H2O = glycolate + GDP + H(+). It carries out the reaction N(2)-(1-hydroxy-2-oxoethyl)-GMP + H2O = glycolate + GMP + H(+). The enzyme catalyses an N(2)-(1-hydroxy-2-oxopropyl)-guanosine in RNA + H2O = a guanosine in RNA + lactate + H(+). It catalyses the reaction an N(2)-(1-hydroxy-2-oxopropyl)-2'-deoxyguanosine in DNA + H2O = a 2'-deoxyguanosine in DNA + lactate + H(+). The catalysed reaction is an N(2)-(1-hydroxy-2-oxoethyl)-guanosine in RNA + H2O = a guanosine in RNA + glycolate + H(+). It carries out the reaction an N(2)-(1-hydroxy-2-oxoethyl)-2'-deoxyguanosine in DNA + H2O = a 2'-deoxyguanosine in DNA + glycolate + H(+). Protein and nucleotide deglycase that catalyzes the deglycation of the Maillard adducts formed between amino groups of proteins or nucleotides and reactive carbonyl groups of glyoxals. Thus, functions as a protein deglycase that repairs methylglyoxal- and glyoxal-glycated proteins, and releases repaired proteins and lactate or glycolate, respectively. Deglycates cysteine, arginine and lysine residues in proteins, and thus reactivates these proteins by reversing glycation by glyoxals. Acts on early glycation intermediates (hemithioacetals and aminocarbinols), preventing the formation of Schiff bases and advanced glycation endproducts (AGE). Also functions as a nucleotide deglycase able to repair glycated guanine in the free nucleotide pool (GTP, GDP, GMP, dGTP) and in DNA and RNA. Is thus involved in a major nucleotide repair system named guanine glycation repair (GG repair), dedicated to reversing methylglyoxal and glyoxal damage via nucleotide sanitization and direct nucleic acid repair. Plays an important role in protecting cells from carbonyl stress. The sequence is that of Protein/nucleic acid deglycase HchA from Staphylococcus aureus (strain MSSA476).